The chain runs to 362 residues: Carbamoyl phosphate synthase small chain (362 aa).

Positions 1-169 (MGKRLLILED…TKTAYPAPGV (169 aa)) are CPSase. L-glutamine is bound by residues S46, G220, and G222. Residues 172–358 (NIVLVDFGLK…LELIDAFQLE (187 aa)) form the Glutamine amidotransferase type-1 domain. C247 acts as the Nucleophile in catalysis. 5 residues coordinate L-glutamine: M248, Q251, N289, G291, and Y292. Active-site residues include H331 and D333.

The protein belongs to the CarA family. In terms of assembly, composed of two chains; the small (or glutamine) chain promotes the hydrolysis of glutamine to ammonia, which is used by the large (or ammonia) chain to synthesize carbamoyl phosphate. Tetramer of heterodimers (alpha,beta)4.

The enzyme catalyses hydrogencarbonate + L-glutamine + 2 ATP + H2O = carbamoyl phosphate + L-glutamate + 2 ADP + phosphate + 2 H(+). It carries out the reaction L-glutamine + H2O = L-glutamate + NH4(+). It functions in the pathway amino-acid biosynthesis; L-arginine biosynthesis; carbamoyl phosphate from bicarbonate: step 1/1. It participates in pyrimidine metabolism; UMP biosynthesis via de novo pathway; (S)-dihydroorotate from bicarbonate: step 1/3. Small subunit of the glutamine-dependent carbamoyl phosphate synthetase (CPSase). CPSase catalyzes the formation of carbamoyl phosphate from the ammonia moiety of glutamine, carbonate, and phosphate donated by ATP, constituting the first step of 2 biosynthetic pathways, one leading to arginine and/or urea and the other to pyrimidine nucleotides. The small subunit (glutamine amidotransferase) binds and cleaves glutamine to supply the large subunit with the substrate ammonia. This is Carbamoyl phosphate synthase small chain from Streptococcus mutans serotype c (strain ATCC 700610 / UA159).